The primary structure comprises 48 residues: uncharacterized protein (48 aa).

A helical membrane pass occupies residues 21-43 (SIFVSLGVFAVSVAILKSRLGNF).

It is found in the membrane. This is an uncharacterized protein from Schizosaccharomyces pombe (strain 972 / ATCC 24843) (Fission yeast).